The sequence spans 329 residues: Putative glucose ABC transporter permease protein TsgC13 (329 aa).

7 consecutive transmembrane segments (helical) span residues 3–23 (FAAG…LAGL), 32–52 (GVLN…GFVV), 60–80 (WLGF…HAFL), 89–109 (VISG…FGSG), 139–161 (AFFR…WFFL), 193–213 (LAVI…SLAF), and 216–236 (LWVP…VVFA).

The protein belongs to the binding-protein-dependent transport system permease family. The complex is composed of two ATP-binding proteins (TsgD13), two transmembrane proteins (TsgB13 and TsgC13) and a solute-binding protein (TsgA13).

Its subcellular location is the cell membrane. Its function is as follows. Part of an ABC transporter complex involved in glucose import (Potential). Responsible for the translocation of the substrate across the membrane. The protein is Putative glucose ABC transporter permease protein TsgC13 (tsgC13) of Haloferax volcanii (strain ATCC 29605 / DSM 3757 / JCM 8879 / NBRC 14742 / NCIMB 2012 / VKM B-1768 / DS2) (Halobacterium volcanii).